A 283-amino-acid polypeptide reads, in one-letter code: Orotidine 5'-phosphate decarboxylase (283 aa).

Lysine 97 functions as the Proton donor in the catalytic mechanism.

Belongs to the OMP decarboxylase family. Type 2 subfamily.

The catalysed reaction is orotidine 5'-phosphate + H(+) = UMP + CO2. The protein operates within pyrimidine metabolism; UMP biosynthesis via de novo pathway; UMP from orotate: step 2/2. The sequence is that of Orotidine 5'-phosphate decarboxylase from Clostridium botulinum (strain Kyoto / Type A2).